Consider the following 314-residue polypeptide: 2,3-dihydroxyphenylpropionate/2,3-dihydroxicinnamic acid 1,2-dioxygenase (314 aa).

The active-site Proton donor is His-115. His-179 (proton acceptor) is an active-site residue.

It belongs to the LigB/MhpB extradiol dioxygenase family. Homotetramer. Requires Fe(2+) as cofactor.

It catalyses the reaction 3-(2,3-dihydroxyphenyl)propanoate + O2 = (2Z,4E)-2-hydroxy-6-oxonona-2,4-dienedioate + H(+). It carries out the reaction (2E)-3-(2,3-dihydroxyphenyl)prop-2-enoate + O2 = (2Z,4E,7E)-2-hydroxy-6-oxonona-2,4,7-trienedioate + H(+). It participates in aromatic compound metabolism; 3-phenylpropanoate degradation. Catalyzes the non-heme iron(II)-dependent oxidative cleavage of 2,3-dihydroxyphenylpropionic acid and 2,3-dihydroxicinnamic acid into 2-hydroxy-6-ketononadienedioate and 2-hydroxy-6-ketononatrienedioate, respectively. In Escherichia coli O139:H28 (strain E24377A / ETEC), this protein is 2,3-dihydroxyphenylpropionate/2,3-dihydroxicinnamic acid 1,2-dioxygenase.